We begin with the raw amino-acid sequence, 199 residues long: Recombination protein RecR (199 aa).

Residues 58–73 form a C4-type zinc finger; the sequence is CARCGNITSADLCDIC. Residues 81 to 176 form the Toprim domain; that stretch reads GELCVVEDVA…QVTSLAQGVP (96 aa).

Belongs to the RecR family.

Functionally, may play a role in DNA repair. It seems to be involved in an RecBC-independent recombinational process of DNA repair. It may act with RecF and RecO. The polypeptide is Recombination protein RecR (Cereibacter sphaeroides (strain ATCC 17025 / ATH 2.4.3) (Rhodobacter sphaeroides)).